The primary structure comprises 760 residues: General transcription and DNA repair factor IIH helicase subunit XPD (760 aa).

The 277-residue stretch at 7–283 (GLLVYFPYDY…KETDEQRLRD (277 aa)) folds into the Helicase ATP-binding domain. 42–49 (MPSGTGKT) provides a ligand contact to ATP. C116, C134, C155, and C190 together coordinate [4Fe-4S] cluster. The short motif at 234-237 (DEAH) is the DEAH box element. Residues 438 to 637 (MDASLAIKPV…TQSRILKARL (200 aa)) are mediates interaction with MMS19.

Belongs to the helicase family. RAD3/XPD subfamily. Component of the 7-subunit TFIIH core complex composed of XPB/ERCC3, XPD/ERCC2, GTF2H1, GTF2H2, GTF2H3, GTF2H4 and GTF2H5, which is active in NER. The core complex associates with the 3-subunit CDK-activating kinase (CAK) module composed of CCNH/cyclin H, CDK7 and MNAT1 to form the 10-subunit holoenzyme (holo-TFIIH) active in transcription. The interaction with GTF2H2 results in the stimulation of the 5'--&gt;3' helicase activity. Component of the MMXD complex, which includes CIAO1, ERCC2, CIAO2B, MMS19 and SLC25A5. Interacts with CIAO1 and CIAO2B; the interaction WITH CIAO2B is direct. Interacts with ATF7IP. Interacts directly with MMS19. Part of TBP-based Pol II pre-initiation complex (PIC), in which Pol II core assembles with general transcription factors and other specific initiation factors including GTF2E1, GTF2E2, GTF2F1, GTF2F2, TCEA1, ERCC2, ERCC3, GTF2H2, GTF2H3, GTF2H4, GTF2H5, GTF2A1, GTF2A2, GTF2B and TBP; this large multi-subunit PIC complex mediates DNA unwinding and targets Pol II core to the transcription start site where the first phosphodiester bond forms. The cofactor is Mg(2+). [4Fe-4S] cluster is required as a cofactor. ISGylated.

The protein resides in the nucleus. It is found in the cytoplasm. It localises to the cytoskeleton. Its subcellular location is the spindle. It catalyses the reaction Couples ATP hydrolysis with the unwinding of duplex DNA at the replication fork by translocating in the 5'-3' direction. This creates two antiparallel DNA single strands (ssDNA). The leading ssDNA polymer is the template for DNA polymerase III holoenzyme which synthesizes a continuous strand.. It carries out the reaction ATP + H2O = ADP + phosphate + H(+). Functionally, ATP-dependent 5'-3' DNA helicase, component of the general transcription and DNA repair factor IIH (TFIIH) core complex, which is involved in general and transcription-coupled nucleotide excision repair (NER) of damaged DNA and, when complexed to CDK-activating kinase (CAK), involved in transcription by RNA polymerase II. In NER, TFIIH acts by opening DNA around the lesion to allow the excision of the damaged oligonucleotide and its replacement by a new DNA fragment. The ATP-dependent helicase activity of XPD/ERCC2 is required for DNA opening. In transcription, TFIIH has an essential role in transcription initiation. When the pre-initiation complex (PIC) has been established, TFIIH is required for promoter opening and promoter escape. Phosphorylation of the C-terminal tail (CTD) of the largest subunit of RNA polymerase II by the kinase module CAK controls the initiation of transcription. XPD/ERCC2 acts by forming a bridge between CAK and the core-TFIIH complex. Involved in the regulation of vitamin-D receptor activity. As part of the mitotic spindle-associated MMXD complex it plays a role in chromosome segregation. Might have a role in aging process and could play a causative role in the generation of skin cancers. The polypeptide is General transcription and DNA repair factor IIH helicase subunit XPD (Ercc2) (Mus musculus (Mouse)).